The chain runs to 158 residues: SKP1-like protein 18 (158 aa).

The segment at 99-157 (ILAANYLNFEGLLGFASQTVADYIKDKTPEEVREIFNIENDFTPEEEEEIRKENAWTFN) is interaction with the F-box domain of F-box proteins.

This sequence belongs to the SKP1 family. In terms of assembly, part of a SCF (SKP1-cullin-F-box) protein ligase complex. Interacts with CPR1/CPR30, EBF1, SKP2A, At3g61590, At4g38940 and At5g49610. Expressed in young seedlings, roots, leaves, floral stems, inflorescences, pollen, and siliques.

The protein localises to the nucleus. The protein operates within protein modification; protein ubiquitination. Its function is as follows. Involved in ubiquitination and subsequent proteasomal degradation of target proteins. Together with CUL1, RBX1 and a F-box protein, it forms a SCF E3 ubiquitin ligase complex. The functional specificity of this complex depends on the type of F-box protein. In the SCF complex, it serves as an adapter that links the F-box protein to CUL1. This Arabidopsis thaliana (Mouse-ear cress) protein is SKP1-like protein 18 (ASK18).